We begin with the raw amino-acid sequence, 181 residues long: UPF0398 protein lmo1889 (181 aa).

The protein belongs to the UPF0398 family.

The sequence is that of UPF0398 protein lmo1889 from Listeria monocytogenes serovar 1/2a (strain ATCC BAA-679 / EGD-e).